The primary structure comprises 691 residues: DNA ligase (691 aa).

NAD(+) contacts are provided by residues 41–45 (DAEYD), 90–91 (SL), and E130. The active-site N6-AMP-lysine intermediate is the K132. Residues R153, E190, K307, and K331 each contribute to the NAD(+) site. Zn(2+)-binding residues include C425, C428, C443, and C449. The BRCT domain occupies 610–691 (APQGVLAGKT…MHTLLEGHAR (82 aa)).

Belongs to the NAD-dependent DNA ligase family. LigA subfamily. Mg(2+) is required as a cofactor. It depends on Mn(2+) as a cofactor.

It carries out the reaction NAD(+) + (deoxyribonucleotide)n-3'-hydroxyl + 5'-phospho-(deoxyribonucleotide)m = (deoxyribonucleotide)n+m + AMP + beta-nicotinamide D-nucleotide.. In terms of biological role, DNA ligase that catalyzes the formation of phosphodiester linkages between 5'-phosphoryl and 3'-hydroxyl groups in double-stranded DNA using NAD as a coenzyme and as the energy source for the reaction. It is essential for DNA replication and repair of damaged DNA. In Burkholderia pseudomallei (strain K96243), this protein is DNA ligase.